The sequence spans 252 residues: Mediator of RNA polymerase II transcription subunit 20 (252 aa).

Belongs to the Mediator complex subunit 20 family. As to quaternary structure, component of the Mediator complex, which includes at least CDK8, MED4, MED6, MED11, MED14, MED17, MED18, MED20, MED21, MED22, MED27, MED28, MED30 and MED31.

The protein resides in the nucleus. Component of the Mediator complex, a coactivator involved in the regulated transcription of nearly all RNA polymerase II-dependent genes. Mediator functions as a bridge to convey information from gene-specific regulatory proteins to the basal RNA polymerase II transcription machinery. Mediator is recruited to promoters by direct interactions with regulatory proteins and serves as a scaffold for the assembly of a functional preinitiation complex with RNA polymerase II and the general transcription factors. Required for activated transcription of the MtnA gene. In Drosophila melanogaster (Fruit fly), this protein is Mediator of RNA polymerase II transcription subunit 20 (MED20).